A 510-amino-acid chain; its full sequence is Inositol-3-phosphate synthase (510 aa).

NAD(+)-binding residues include glycine 70, glycine 71, asparagine 72, asparagine 73, aspartate 143, isoleucine 180, glutamine 190, arginine 193, threonine 230, alanine 231, asparagine 232, threonine 233, glycine 281, serine 282, aspartate 306, serine 309, asparagine 340, asparagine 341, aspartate 342, lysine 355, glycine 393, aspartate 394, aspartate 422, and serine 423.

This sequence belongs to the myo-inositol 1-phosphate synthase family. It depends on NAD(+) as a cofactor.

Its subcellular location is the cytoplasm. The protein localises to the cytosol. It localises to the nucleus. The enzyme catalyses D-glucose 6-phosphate = 1D-myo-inositol 3-phosphate. It participates in polyol metabolism; myo-inositol biosynthesis; myo-inositol from D-glucose 6-phosphate: step 1/2. In terms of biological role, key enzyme in myo-inositol biosynthesis pathway that catalyzes the conversion of glucose 6-phosphate to 1-myo-inositol 1-phosphate in a NAD-dependent manner. This chain is Inositol-3-phosphate synthase, found in Sesamum indicum (Oriental sesame).